The sequence spans 215 residues: UPF0502 protein Ping_1905 (215 aa).

It belongs to the UPF0502 family.

In Psychromonas ingrahamii (strain DSM 17664 / CCUG 51855 / 37), this protein is UPF0502 protein Ping_1905.